The following is a 312-amino-acid chain: Glyoxylate/hydroxypyruvate reductase A (312 aa).

Arginine 227 is an active-site residue. Histidine 275 serves as the catalytic Proton donor.

The protein belongs to the D-isomer specific 2-hydroxyacid dehydrogenase family. GhrA subfamily.

It localises to the cytoplasm. It carries out the reaction glycolate + NADP(+) = glyoxylate + NADPH + H(+). The enzyme catalyses (R)-glycerate + NAD(+) = 3-hydroxypyruvate + NADH + H(+). It catalyses the reaction (R)-glycerate + NADP(+) = 3-hydroxypyruvate + NADPH + H(+). Its function is as follows. Catalyzes the NADPH-dependent reduction of glyoxylate and hydroxypyruvate into glycolate and glycerate, respectively. The polypeptide is Glyoxylate/hydroxypyruvate reductase A (Citrobacter koseri (strain ATCC BAA-895 / CDC 4225-83 / SGSC4696)).